Consider the following 356-residue polypeptide: UDP-N-acetylglucosamine--N-acetylmuramyl-(pentapeptide) pyrophosphoryl-undecaprenol N-acetylglucosamine transferase (356 aa).

UDP-N-acetyl-alpha-D-glucosamine contacts are provided by residues 12–14 (TGG), Asn124, Arg163, Ser188, Ile242, 261–266 (ALTVSE), and Gln287.

The protein belongs to the glycosyltransferase 28 family. MurG subfamily.

It is found in the cell inner membrane. It carries out the reaction di-trans,octa-cis-undecaprenyl diphospho-N-acetyl-alpha-D-muramoyl-L-alanyl-D-glutamyl-meso-2,6-diaminopimeloyl-D-alanyl-D-alanine + UDP-N-acetyl-alpha-D-glucosamine = di-trans,octa-cis-undecaprenyl diphospho-[N-acetyl-alpha-D-glucosaminyl-(1-&gt;4)]-N-acetyl-alpha-D-muramoyl-L-alanyl-D-glutamyl-meso-2,6-diaminopimeloyl-D-alanyl-D-alanine + UDP + H(+). Its pathway is cell wall biogenesis; peptidoglycan biosynthesis. Its function is as follows. Cell wall formation. Catalyzes the transfer of a GlcNAc subunit on undecaprenyl-pyrophosphoryl-MurNAc-pentapeptide (lipid intermediate I) to form undecaprenyl-pyrophosphoryl-MurNAc-(pentapeptide)GlcNAc (lipid intermediate II). The protein is UDP-N-acetylglucosamine--N-acetylmuramyl-(pentapeptide) pyrophosphoryl-undecaprenol N-acetylglucosamine transferase of Azotobacter vinelandii (strain DJ / ATCC BAA-1303).